Consider the following 191-residue polypeptide: ECF RNA polymerase sigma-E factor (191 aa).

Residues 1–153 are binds RNAP core; the sequence is MSEQLTDQVL…MAITLRELDG (153 aa). The segment at 25-92 is sigma-70 factor domain-2; that stretch reads LVVRYQHKVA…KNYLVAQGRR (68 aa). Positions 48-61 match the Polymerase core binding motif; that stretch reads DVVQEAFIKAYRAL. A sigma-70 factor domain-4 region spans residues 129–180; sequence QIVFRTIESLPEDLRMAITLRELDGLSYEEIAAIMDCPVGTVRSRIFRAREA. The H-T-H motif DNA-binding region spans 156-175; the sequence is YEEIAAIMDCPVGTVRSRIF.

The protein belongs to the sigma-70 factor family. ECF subfamily. In terms of assembly, interacts transiently with the RNAP catalytic core formed by RpoA, RpoB, RpoC and RpoZ (2 alpha, 1 beta, 1 beta' and 1 omega subunit) to form the RNAP holoenzyme that can initiate transcription. Interacts 1:1 with anti-sigma-E factor RseA which prevents binding to RNAP catalytic core.

It localises to the cytoplasm. Its activity is regulated as follows. ECF sigma-E is held in an inactive form by its cognate anti-sigma factor (RseA) until released by regulated intramembrane proteolysis (RIP). RIP occurs when an extracytoplasmic signal (periplasmic stress and excess LPS) triggers a concerted proteolytic cascade to transmit information and elicit cellular responses. The anti-sigma factor RseA is an inner membrane protein, binding sigma-E in the cytoplasm and RseB in the periplasm. RseA is first cut extracytoplasmically (site-1 protease, S1P, by DegS), then within the membrane itself (site-2 protease, S2P, by RseP), while cytoplasmic proteases (predominantly ClpX-ClpP) finish degrading the regulatory protein, liberating sigma-E. Degradation of RseA requires 2 signals to activate DegS; an outer membrane protein (OMP) signal activates DegS, while an LPS signal causes release of RseB from RseA, freeing RseA to be cleaved. Sigma factors are initiation factors that promote the attachment of RNA polymerase (RNAP) to specific initiation sites and are then released. Extracytoplasmic function (ECF) sigma-E controls the envelope stress response, responding to periplasmic protein stress, increased levels of periplasmic lipopolysaccharide (LPS) as well as heat shock and oxidative stress; it controls protein processing in the extracytoplasmic compartment. This Escherichia coli O157:H7 protein is ECF RNA polymerase sigma-E factor (rpoE).